The chain runs to 66 residues: uncharacterized protein (66 aa).

A helical membrane pass occupies residues 32 to 49; sequence WAFSLLIAGSAFLWIYMR.

The protein localises to the membrane. This is an uncharacterized protein from Bacillus subtilis (strain 168).